A 264-amino-acid polypeptide reads, in one-letter code: Thymidylate synthase (264 aa).

Residue Arg21 participates in dUMP binding. Residue His51 coordinates (6R)-5,10-methylene-5,6,7,8-tetrahydrofolate. Arg126–Arg127 lines the dUMP pocket. Residue Cys146 is the Nucleophile of the active site. Residues Arg166–Asp169, Asn177, and His207–Tyr209 contribute to the dUMP site. Asp169 provides a ligand contact to (6R)-5,10-methylene-5,6,7,8-tetrahydrofolate. Ala263 is a (6R)-5,10-methylene-5,6,7,8-tetrahydrofolate binding site.

Belongs to the thymidylate synthase family. Bacterial-type ThyA subfamily. In terms of assembly, homodimer.

It is found in the cytoplasm. It catalyses the reaction dUMP + (6R)-5,10-methylene-5,6,7,8-tetrahydrofolate = 7,8-dihydrofolate + dTMP. It functions in the pathway pyrimidine metabolism; dTTP biosynthesis. Catalyzes the reductive methylation of 2'-deoxyuridine-5'-monophosphate (dUMP) to 2'-deoxythymidine-5'-monophosphate (dTMP) while utilizing 5,10-methylenetetrahydrofolate (mTHF) as the methyl donor and reductant in the reaction, yielding dihydrofolate (DHF) as a by-product. This enzymatic reaction provides an intracellular de novo source of dTMP, an essential precursor for DNA biosynthesis. The chain is Thymidylate synthase from Methylobacillus flagellatus (strain ATCC 51484 / DSM 6875 / VKM B-1610 / KT).